Here is a 248-residue protein sequence, read N- to C-terminus: Ras-like protein family member 11B (248 aa).

Positions 29 to 246 (AGRRLVKIAV…ALSAKVRTVT (218 aa)) are small GTPase-like. GTP contacts are provided by residues 40 to 47 (GASGVGKT), 87 to 91 (DTPGI), and 152 to 155 (NKAD). Residues 205 to 229 (QQPSGTPEKRRTSLIPRPKSPNMQD) form a disordered region.

This sequence belongs to the small GTPase superfamily. Ras family.

The enzyme catalyses GTP + H2O = GDP + phosphate + H(+). The polypeptide is Ras-like protein family member 11B (Bos taurus (Bovine)).